The following is a 459-amino-acid chain: Beta-glucosidase (459 aa).

Glu171 acts as the Proton donor in catalysis. Glu359 acts as the Nucleophile in catalysis.

Belongs to the glycosyl hydrolase 1 family.

It carries out the reaction Hydrolysis of terminal, non-reducing beta-D-glucosyl residues with release of beta-D-glucose.. The protein is Beta-glucosidase (abg) of Agrobacterium sp. (strain ATCC 21400).